We begin with the raw amino-acid sequence, 428 residues long: 3-phosphoshikimate 1-carboxyvinyltransferase (428 aa).

Residues Lys-20, Ser-21, and Arg-25 each coordinate 3-phosphoshikimate. Lys-20 is a phosphoenolpyruvate binding site. Residues Gly-93 and Arg-122 each contribute to the phosphoenolpyruvate site. Ser-167, Gln-169, Asp-317, and Lys-344 together coordinate 3-phosphoshikimate. Position 169 (Gln-169) interacts with phosphoenolpyruvate. Asp-317 serves as the catalytic Proton acceptor. 2 residues coordinate phosphoenolpyruvate: Arg-348 and Arg-390.

Belongs to the EPSP synthase family. In terms of assembly, monomer.

It is found in the cytoplasm. The catalysed reaction is 3-phosphoshikimate + phosphoenolpyruvate = 5-O-(1-carboxyvinyl)-3-phosphoshikimate + phosphate. It participates in metabolic intermediate biosynthesis; chorismate biosynthesis; chorismate from D-erythrose 4-phosphate and phosphoenolpyruvate: step 6/7. Its function is as follows. Catalyzes the transfer of the enolpyruvyl moiety of phosphoenolpyruvate (PEP) to the 5-hydroxyl of shikimate-3-phosphate (S3P) to produce enolpyruvyl shikimate-3-phosphate and inorganic phosphate. The sequence is that of 3-phosphoshikimate 1-carboxyvinyltransferase from Leptospira biflexa serovar Patoc (strain Patoc 1 / ATCC 23582 / Paris).